The primary structure comprises 394 residues: Argininosuccinate synthase (394 aa).

Residue 8–16 participates in ATP binding; the sequence is AYSGGLDTS. L-citrulline-binding residues include Y86 and S91. G116 contacts ATP. 3 residues coordinate L-aspartate: T118, N122, and D123. N122 is a binding site for L-citrulline. 5 residues coordinate L-citrulline: R126, S172, S181, E257, and Y269.

The protein belongs to the argininosuccinate synthase family. Type 1 subfamily. In terms of assembly, homotetramer.

Its subcellular location is the cytoplasm. The enzyme catalyses L-citrulline + L-aspartate + ATP = 2-(N(omega)-L-arginino)succinate + AMP + diphosphate + H(+). Its pathway is amino-acid biosynthesis; L-arginine biosynthesis; L-arginine from L-ornithine and carbamoyl phosphate: step 2/3. This Methanosarcina mazei (strain ATCC BAA-159 / DSM 3647 / Goe1 / Go1 / JCM 11833 / OCM 88) (Methanosarcina frisia) protein is Argininosuccinate synthase.